We begin with the raw amino-acid sequence, 690 residues long: Phosphate acetyltransferase (690 aa).

The phosphate acetyltransferase stretch occupies residues 365-690; it reads MFTYRLLQQA…TAIQAQGVHE (326 aa).

In the N-terminal section; belongs to the CobB/CobQ family. This sequence in the C-terminal section; belongs to the phosphate acetyltransferase and butyryltransferase family.

It localises to the cytoplasm. The catalysed reaction is acetyl-CoA + phosphate = acetyl phosphate + CoA. The protein operates within metabolic intermediate biosynthesis; acetyl-CoA biosynthesis; acetyl-CoA from acetate: step 2/2. Its function is as follows. Involved in acetate metabolism. In Mycobacterium tuberculosis (strain CDC 1551 / Oshkosh), this protein is Phosphate acetyltransferase (pta).